A 362-amino-acid polypeptide reads, in one-letter code: DNA polymerase IV (362 aa).

Residues I6 to G187 form the UmuC domain. Mg(2+) is bound by residues D10 and D105. Residue E106 is part of the active site.

It belongs to the DNA polymerase type-Y family. Monomer. Requires Mg(2+) as cofactor.

It localises to the cytoplasm. The catalysed reaction is DNA(n) + a 2'-deoxyribonucleoside 5'-triphosphate = DNA(n+1) + diphosphate. Its function is as follows. Poorly processive, error-prone DNA polymerase involved in untargeted mutagenesis. Copies undamaged DNA at stalled replication forks, which arise in vivo from mismatched or misaligned primer ends. These misaligned primers can be extended by PolIV. Exhibits no 3'-5' exonuclease (proofreading) activity. May be involved in translesional synthesis, in conjunction with the beta clamp from PolIII. This chain is DNA polymerase IV, found in Leptospira interrogans serogroup Icterohaemorrhagiae serovar copenhageni (strain Fiocruz L1-130).